The following is a 314-amino-acid chain: Ribonuclease Z (314 aa).

Residues His63, His65, Asp67, His68, His142, Asp205, and His263 each contribute to the Zn(2+) site. Residue Asp67 is the Proton acceptor of the active site.

It belongs to the RNase Z family. As to quaternary structure, homodimer. Zn(2+) serves as cofactor.

The catalysed reaction is Endonucleolytic cleavage of RNA, removing extra 3' nucleotides from tRNA precursor, generating 3' termini of tRNAs. A 3'-hydroxy group is left at the tRNA terminus and a 5'-phosphoryl group is left at the trailer molecule.. In terms of biological role, zinc phosphodiesterase, which displays some tRNA 3'-processing endonuclease activity. Probably involved in tRNA maturation, by removing a 3'-trailer from precursor tRNA. The protein is Ribonuclease Z of Kineococcus radiotolerans (strain ATCC BAA-149 / DSM 14245 / SRS30216).